A 623-amino-acid polypeptide reads, in one-letter code: Negative regulator of PDR1-mediated fluconazole resistance JJJ1 (623 aa).

The region spanning 4–70 (CYYDLLEVRS…QERAWYDSHK (67 aa)) is the J domain. The C2H2-type zinc-finger motif lies at 363-387 (YDCFICKKSFKSEKQLENHIKTKLH). Disordered stretches follow at residues 448-476 (QSSVTDSEDFTDDNNDTEDQNSLVDKLSN), 499-581 (GADN…NDAK), and 599-623 (SHIQTEGHVSPLSKVKKGKRSKKNK). Over residues 453 to 466 (DSEDFTDDNNDTED) the composition is skewed to acidic residues. The segment covering 499-508 (GADNSETQNA) has biased composition (polar residues). Residues 525–538 (ELTRILRELEESKT) show a composition bias toward basic and acidic residues. Composition is skewed to basic residues over residues 553–564 (KKKTKAKKKKNK) and 612–623 (KVKKGKRSKKNK).

It is found in the nucleus. In terms of biological role, acts as a negative regulator of fluconazole resistance, primarily through down-regulation of the ABC transporter gene CDR1 via inactivation of the PDR1 transcriptional pathway. This Candida glabrata (strain ATCC 2001 / BCRC 20586 / JCM 3761 / NBRC 0622 / NRRL Y-65 / CBS 138) (Yeast) protein is Negative regulator of PDR1-mediated fluconazole resistance JJJ1.